The sequence spans 354 residues: Dihydroorotate dehydrogenase (quinone) (354 aa).

FMN-binding positions include 67–71 and Thr91; that span reads AGFDK. Residue Lys71 participates in substrate binding. 116-120 contributes to the substrate binding site; the sequence is NRMGF. The FMN site is built by Asn144 and Asn177. Asn177 lines the substrate pocket. The active-site Nucleophile is the Ser180. Asn182 is a binding site for substrate. 2 residues coordinate FMN: Lys213 and Thr241. 242-243 is a binding site for substrate; sequence NT. FMN-binding positions include Gly265, Gly294, and 315–316; that span reads YT.

The protein belongs to the dihydroorotate dehydrogenase family. Type 2 subfamily. As to quaternary structure, monomer. FMN serves as cofactor.

The protein localises to the cell membrane. The catalysed reaction is (S)-dihydroorotate + a quinone = orotate + a quinol. Its pathway is pyrimidine metabolism; UMP biosynthesis via de novo pathway; orotate from (S)-dihydroorotate (quinone route): step 1/1. In terms of biological role, catalyzes the conversion of dihydroorotate to orotate with quinone as electron acceptor. The chain is Dihydroorotate dehydrogenase (quinone) from Mycolicibacterium smegmatis (strain ATCC 700084 / mc(2)155) (Mycobacterium smegmatis).